The chain runs to 382 residues: Gap junction alpha-1 protein (382 aa).

Residues 2-23 (GDWSALGKLLDKVQAYSTAGGK) lie on the Cytoplasmic side of the membrane. Serine 5 is subject to Phosphoserine. A helical transmembrane segment spans residues 24 to 44 (VWLSVLFIFRILLLGTAVESA). The Extracellular segment spans residues 45–76 (WGDEQSAFRCNTQQPGCENVCYDKSFPISHVR). Intrachain disulfides connect cysteine 54–cysteine 192 and cysteine 187–cysteine 198. Residues 77-97 (FWVLQIIFVSVPTLLYLAHVF) form a helical membrane-spanning segment. At 98–155 (YVMRKEEKLNKKEEELKVAQTDGVNVEMHLKQIEIKKFKYGIEEHGKVKMRGGLLRTY) the chain is on the cytoplasmic side. Lysine 144 participates in a covalent cross-link: Glycyl lysine isopeptide (Lys-Gly) (interchain with G-Cter in SUMO). Residues 156-176 (IISILFKSIFEVAFLLIQWYI) form a helical membrane-spanning segment. Residues 177–207 (YGFSLSAVYTCKRDPCPHQVDCFLSRPTEKT) are Extracellular-facing. A helical membrane pass occupies residues 208 to 228 (IFIIFMLVVSLVSLALNIIEL). The Cytoplasmic segment spans residues 229-382 (FYVFFKGVKD…SRPRPDDLEI (154 aa)). A Glycyl lysine isopeptide (Lys-Gly) (interchain with G-Cter in SUMO) cross-link involves residue lysine 237. The segment at 244-382 (SDPYHATSGA…SRPRPDDLEI (139 aa)) is interaction with NOV. Tyrosine 247 carries the post-translational modification Phosphotyrosine. Phosphoserine is present on residues serine 255 and serine 262. Residues 264-382 (KYAYFNGCSS…SRPRPDDLEI (119 aa)) form an interaction with UBQLN4 region. Residue cysteine 271 is modified to S-nitrosocysteine. A Phosphothreonine modification is found at threonine 275. Positions 279 to 300 (SPMSPPGYKPVTGDRNNSSCRN) are disordered. A phosphoserine mark is found at serine 306 and serine 314. The segment covering 317–332 (QNRMGQAGSTISNSHA) has biased composition (polar residues). A disordered region spans residues 317-382 (QNRMGQAGST…SRPRPDDLEI (66 aa)). The residue at position 325 (serine 325) is a Phosphoserine; by CK1. Position 326 is a phosphothreonine (threonine 326). Serine 328 and serine 330 each carry phosphoserine; by CK1. Phosphoserine occurs at positions 344 and 365. The segment covering 362–374 (RPSSRASSRASSR) has biased composition (low complexity). At serine 368 the chain carries Phosphoserine; by PKC/PRKCG and PKC/PRKCD. Phosphoserine occurs at positions 369 and 373.

This sequence belongs to the connexin family. Alpha-type (group II) subfamily. As to quaternary structure, a connexon is composed of a hexamer of connexins. Interacts with SGSM3. Interacts with RIC1/CIP150. Interacts with CNST and CSNK1D. Interacts (via C-terminus) with TJP1. Interacts (via C-terminus) with SRC (via SH3 domain). Interacts (not ubiquitinated) with UBQLN4 (via UBA domain). Interacts with NOV. Interacts with TMEM65. Interacts with ANK3/ANKG and PKP2. In terms of processing, phosphorylation at Ser-325, Ser-328 and Ser-330 by CK1 modulates gap junction assembly. Phosphorylated at Ser-368 by PRKCG; phosphorylation induces disassembly of gap junction plaques and inhibition of gap junction activity. Phosphorylation at Ser-368 by PRKCD triggers its internalization into small vesicles leading to proteasome-mediated degradation. Post-translationally, sumoylated with SUMO1, SUMO2 and SUMO3, which may regulate the level of functional Cx43 gap junctions at the plasma membrane. May be desumoylated by SENP1 or SENP2. S-nitrosylation at Cys-271 is enriched at the muscle endothelial gap junction in arteries, it augments channel permeability and may regulate of smooth muscle cell to endothelial cell communication. In terms of processing, acetylated in the developing cortex; leading to delocalization from the cell membrane.

The protein localises to the cell membrane. It localises to the cell junction. The protein resides in the gap junction. Its subcellular location is the endoplasmic reticulum. Gap junction protein that acts as a regulator of bladder capacity. A gap junction consists of a cluster of closely packed pairs of transmembrane channels, the connexons, through which materials of low MW diffuse from one cell to a neighboring cell. May play a critical role in the physiology of hearing by participating in the recycling of potassium to the cochlear endolymph. Negative regulator of bladder functional capacity: acts by enhancing intercellular electrical and chemical transmission, thus sensitizing bladder muscles to cholinergic neural stimuli and causing them to contract. May play a role in cell growth inhibition through the regulation of NOV expression and localization. Plays an essential role in gap junction communication in the ventricles. In Macaca fascicularis (Crab-eating macaque), this protein is Gap junction alpha-1 protein (GJA1).